The following is a 308-amino-acid chain: 4-diphosphocytidyl-2-C-methyl-D-erythritol kinase (308 aa).

Lysine 23 is a catalytic residue. Proline 108–alanine 118 is an ATP binding site. Aspartate 150 is an active-site residue.

The protein belongs to the GHMP kinase family. IspE subfamily.

The catalysed reaction is 4-CDP-2-C-methyl-D-erythritol + ATP = 4-CDP-2-C-methyl-D-erythritol 2-phosphate + ADP + H(+). Its pathway is isoprenoid biosynthesis; isopentenyl diphosphate biosynthesis via DXP pathway; isopentenyl diphosphate from 1-deoxy-D-xylulose 5-phosphate: step 3/6. Functionally, catalyzes the phosphorylation of the position 2 hydroxy group of 4-diphosphocytidyl-2C-methyl-D-erythritol. This is 4-diphosphocytidyl-2-C-methyl-D-erythritol kinase from Nitrobacter winogradskyi (strain ATCC 25391 / DSM 10237 / CIP 104748 / NCIMB 11846 / Nb-255).